A 604-amino-acid polypeptide reads, in one-letter code: MARISFSYLCPASWYFTVPTVSPFLRQRVAFLGLFFISCLLLLMLIIDFRHWSASLPRDRQYERYLARVGELEATDTEDPNLNYGLVVDCGSSGSRIFVYFWPRHNGNPHDLLDIKQMRDRNSQPVVKKIKPGISAMADTPEHASDYLRPLLSFAAAHVPVKKHKETPLYILCTAGMRLLPERKQLAILADLVKDLPLEFDFLFSQSQAEVISGKQEGVYAWIGINFVLGRFDHEDESDAEATQELAAGRRRTVGILDMGGASLQIAYEVPTSTSVLPAKQEEAAKILLAEFNLGCDVQHTEHVYRVYVTTFLGFGGNFARQRYEDLVLNETLNKNRLLGQKTGLSPDNPFLDPCLPVGLTDVVERNSQVLHVRGRGDWVSCRAMLSPLLARSNTSQASLNGIYQSPIDFNNSEFYGFSEFFYCTEDVLRIGGRYHGPTFAKAAQDYCGMAWSVLTQRFKNGLFSSHADEHRLKYQCFKSAWMYQVLHEGFHFPYDYPNLRTAQLVYGREVQWTLGAILYKTRFLPLRDLRQEGVRQAHGSWFRLSFVYNHYLFFACILVVLLAIVLYLLRLRRIHHRQTRASAPLDLLWLEEVVPMMGVQVGP.

Over 1–28 (MARISFSYLCPASWYFTVPTVSPFLRQR) the chain is Cytoplasmic. Residues 29-49 (VAFLGLFFISCLLLLMLIIDF) form a helical membrane-spanning segment. Residues 50 to 546 (RHWSASLPRD…QAHGSWFRLS (497 aa)) lie on the Vesicular side of the membrane. E217 (proton acceptor) is an active-site residue. N-linked (GlcNAc...) asparagine glycosylation is present at N330. A disulfide bond links C448 and C477. Residues 547–567 (FVYNHYLFFACILVVLLAIVL) form a helical membrane-spanning segment. Residues 568–604 (YLLRLRRIHHRQTRASAPLDLLWLEEVVPMMGVQVGP) are Cytoplasmic-facing.

The protein belongs to the GDA1/CD39 NTPase family. The cofactor is Ca(2+). Mg(2+) is required as a cofactor.

It is found in the cytoplasmic vesicle membrane. The catalysed reaction is a ribonucleoside 5'-triphosphate + H2O = a ribonucleoside 5'-diphosphate + phosphate + H(+). It carries out the reaction UTP + H2O = UDP + phosphate + H(+). It catalyses the reaction GTP + H2O = GDP + phosphate + H(+). The enzyme catalyses CTP + H2O = CDP + phosphate + H(+). Catalyzes the hydrolysis of nucleoside triphosphates and diphosphates in a calcium- or magnesium-dependent manner. Preferentially hydrolyzes nucleoside 5'-triphosphates, with substrate preference for UTP &gt; GTP &gt; CTP. Hydrolyzes ATP and nucleoside diphosphates only to a minor extent. The sequence is that of Ectonucleoside triphosphate diphosphohydrolase 7 (ENTPD7) from Pongo abelii (Sumatran orangutan).